A 333-amino-acid polypeptide reads, in one-letter code: Glycerol-3-phosphate dehydrogenase [NAD(P)+] (333 aa).

Positions 13, 14, 34, and 108 each coordinate NADPH. Residues Lys108, Gly137, and Thr139 each contribute to the sn-glycerol 3-phosphate site. NADPH is bound at residue Ala141. Lys193, Asp246, Ser256, Arg257, and Asn258 together coordinate sn-glycerol 3-phosphate. Lys193 serves as the catalytic Proton acceptor. Arg257 contacts NADPH. Glu283 provides a ligand contact to NADPH.

This sequence belongs to the NAD-dependent glycerol-3-phosphate dehydrogenase family.

It is found in the cytoplasm. It catalyses the reaction sn-glycerol 3-phosphate + NAD(+) = dihydroxyacetone phosphate + NADH + H(+). The catalysed reaction is sn-glycerol 3-phosphate + NADP(+) = dihydroxyacetone phosphate + NADPH + H(+). The protein operates within membrane lipid metabolism; glycerophospholipid metabolism. Catalyzes the reduction of the glycolytic intermediate dihydroxyacetone phosphate (DHAP) to sn-glycerol 3-phosphate (G3P), the key precursor for phospholipid synthesis. The polypeptide is Glycerol-3-phosphate dehydrogenase [NAD(P)+] (Idiomarina loihiensis (strain ATCC BAA-735 / DSM 15497 / L2-TR)).